The primary structure comprises 373 residues: Protein U3 (373 aa).

It belongs to the herpesviridae US22 family.

This is Protein U3 (U3) from Human herpesvirus 6A (strain Uganda-1102) (HHV-6 variant A).